The primary structure comprises 149 residues: Transcriptional repressor NrdR (149 aa).

A zinc finger spans residues 3–34; it reads CPFCFAVDTKVIDSRLVGEGSSVRRRRQCLVC. In terms of domain architecture, ATP-cone spans 49–139; that stretch reads PRVVKSNDVR…VYRSFEDIRE (91 aa).

It belongs to the NrdR family. It depends on Zn(2+) as a cofactor.

Functionally, negatively regulates transcription of bacterial ribonucleotide reductase nrd genes and operons by binding to NrdR-boxes. In Cronobacter sakazakii (strain ATCC BAA-894) (Enterobacter sakazakii), this protein is Transcriptional repressor NrdR.